The sequence spans 659 residues: Centrosomal protein of 76 kDa (659 aa).

Phosphoserine is present on residues Ser-75 and Ser-83.

This sequence belongs to the CEP76 family. In terms of assembly, interacts with CCP110 and CEP97.

Its subcellular location is the cytoplasm. The protein localises to the cytoskeleton. It localises to the microtubule organizing center. The protein resides in the centrosome. It is found in the centriole. Its function is as follows. Centrosomal protein involved in regulation of centriole duplication. Required to limit centriole duplication to once per cell cycle by preventing centriole reduplication. The polypeptide is Centrosomal protein of 76 kDa (CEP76) (Homo sapiens (Human)).